The chain runs to 215 residues: Nascent polypeptide-associated complex subunit alpha (215 aa).

The interval 1–81 is disordered; that stretch reads MPGEATDTVP…SEKKARKAMS (81 aa). Over residues 9-28 the composition is skewed to polar residues; that stretch reads VPATEQELPQPQAETGSGTE. Over residues 29 to 42 the composition is skewed to acidic residues; it reads SDSDESVPELEEQD. The residue at position 43 (serine 43) is a Phosphoserine; by ILK1. The span at 44–57 shows a compositional bias: low complexity; sequence TQATTQQAQLAAAA. Residues 69-80 are required for DNA-binding; sequence QSRSEKKARKAM. One can recognise an NAC-A/B domain in the interval 70–135; the sequence is SRSEKKARKA…AKIEDLSQQA (66 aa). Positions 93–108 are RNA/DNA-binding; sequence RVTIRKSKNILFVITK. At serine 132 the chain carries Phosphoserine. At lysine 142 the chain carries N6-acetyllysine; alternate. Lysine 142 participates in a covalent cross-link: Glycyl lysine isopeptide (Lys-Gly) (interchain with G-Cter in SUMO2); alternate. At threonine 159 the chain carries Phosphothreonine; by GSK3-beta. The residue at position 161 (threonine 161) is a Phosphothreonine. 4 positions are modified to phosphoserine: serine 166, serine 186, serine 191, and serine 203. The UBA domain maps to 176–213; the sequence is VEVKDIELVMSQANVSRAKAVRALKNNSNDIVNAIMEL.

It belongs to the NAC-alpha family. Part of the nascent polypeptide-associated complex (NAC), which is a heterodimer of NACA and BTF3 (via NAC-A/B domains). NAC associates with ribosomes through the BTF3/NACB subunit and contacts the ribosomal protein L23, which is positioned near the exiting site. Both subunits can contact nascent polypeptide chains. NACA may also form homodimers, and only this form binds DNA. Interacts with TBP and JUN. Phosphorylation of Ser-43 by ILK during cell adhesion may promote nuclear localization. Phosphorylation of Thr-159 by GSK3B may promote proteasome mediated degradation.

It is found in the cytoplasm. Its subcellular location is the nucleus. In terms of biological role, prevents inappropriate targeting of non-secretory polypeptides to the endoplasmic reticulum (ER). Binds to nascent polypeptide chains as they emerge from the ribosome and blocks their interaction with the signal recognition particle (SRP), which normally targets nascent secretory peptides to the ER. Also reduces the inherent affinity of ribosomes for protein translocation sites in the ER membrane (M sites). May act as a specific coactivator for JUN, binding to DNA and stabilizing the interaction of JUN homodimers with target gene promoters. The protein is Nascent polypeptide-associated complex subunit alpha (NACA) of Bos taurus (Bovine).